The sequence spans 277 residues: Protein CMSS1 (277 aa).

Positions 1–14 (MADDLGNEWWEEPA) are enriched in acidic residues. The tract at residues 1-91 (MADDLGNEWW…QHAPTAGTPE (91 aa)) is disordered. Over residues 24–34 (EEVKESEESKG) the composition is skewed to basic and acidic residues. Positions 35 to 52 (NKKKKIPSGKTQVKRKKE) are enriched in basic residues. A compositionally biased stretch (basic and acidic residues) spans 53-66 (VKVSQEAEKEDSAP).

This sequence belongs to the CMS1 family.

This Xenopus laevis (African clawed frog) protein is Protein CMSS1 (cmss1).